We begin with the raw amino-acid sequence, 140 residues long: ATP synthase epsilon chain (140 aa).

The protein belongs to the ATPase epsilon chain family. In terms of assembly, F-type ATPases have 2 components, CF(1) - the catalytic core - and CF(0) - the membrane proton channel. CF(1) has five subunits: alpha(3), beta(3), gamma(1), delta(1), epsilon(1). CF(0) has three main subunits: a, b and c.

Its subcellular location is the cell inner membrane. Produces ATP from ADP in the presence of a proton gradient across the membrane. The sequence is that of ATP synthase epsilon chain from Marinobacter nauticus (strain ATCC 700491 / DSM 11845 / VT8) (Marinobacter aquaeolei).